The following is a 788-amino-acid chain: Protein translocase subunit SecA (788 aa).

ATP is bound by residues Gln-85, 103–107, and Asp-494; that span reads GEGKT.

The protein belongs to the SecA family. Monomer and homodimer. Part of the essential Sec protein translocation apparatus which comprises SecA, SecYEG and auxiliary proteins SecDF. Other proteins may also be involved.

It localises to the cell membrane. Its subcellular location is the cytoplasm. It catalyses the reaction ATP + H2O + cellular proteinSide 1 = ADP + phosphate + cellular proteinSide 2.. Part of the Sec protein translocase complex. Interacts with the SecYEG preprotein conducting channel. Has a central role in coupling the hydrolysis of ATP to the transfer of proteins into and across the cell membrane, serving as an ATP-driven molecular motor driving the stepwise translocation of polypeptide chains across the membrane. This chain is Protein translocase subunit SecA, found in Oenococcus oeni (strain ATCC BAA-331 / PSU-1).